A 261-amino-acid chain; its full sequence is Phosphonates import ATP-binding protein PhnC (261 aa).

In terms of domain architecture, ABC transporter spans 9-253 (IQLKDVSKIY…VFDDIYNGGN (245 aa)). Residue 42–49 (GLSGAGKS) participates in ATP binding.

Belongs to the ABC transporter superfamily. Phosphonates importer (TC 3.A.1.9.1) family. The complex is composed of two ATP-binding proteins (PhnC), two transmembrane proteins (PhnE) and a solute-binding protein (PhnD).

It localises to the cell membrane. The catalysed reaction is phosphonate(out) + ATP + H2O = phosphonate(in) + ADP + phosphate + H(+). In terms of biological role, part of the ABC transporter complex PhnCDE involved in phosphonates import. Responsible for energy coupling to the transport system. In Lactobacillus gasseri (strain ATCC 33323 / DSM 20243 / BCRC 14619 / CIP 102991 / JCM 1131 / KCTC 3163 / NCIMB 11718 / NCTC 13722 / AM63), this protein is Phosphonates import ATP-binding protein PhnC.